Consider the following 953-residue polypeptide: Coatomer subunit beta (953 aa).

Threonine 2 carries the N-acetylthreonine modification. 6 HEAT repeats span residues 96–131 (HEMILVCDAYRKDLQHPNEFIRGSTLRFLCKLKEAE), 132–168 (LLEPLMPAIRACLEHRHSYVRRNAVLAIYTIYRNFEH), 240–276 (SERARFIRCIYNLLQSSSPAVKYEAAGTLVTLSSAPT), 277–314 (AIKAAAQCYIDLIIKESDNNVKLIVLDRLIELKEHPAH), 316–353 (RVLQDLVMDILRVLSTPDLEVRKKTLQLALDLVSSRNV), and 396–433 (DMAANVIPVLMEFLSDSNEAAAADVLEFVREAIQRFDN). Lysine 494 bears the N6-acetyllysine mark.

In terms of assembly, oligomeric complex that consists of at least the alpha, beta, beta', gamma, delta, epsilon and zeta subunits. Interacts with ARF1 (myristoylated); this interaction is required for binding of COPB1 to Golgi membranes. Interacts with CAPN8 and PRKCE. Interacts with SCYL1. Interacts with COPG1. Interacts (via trunk domain) with ARF1 (via switch I region); the interaction is direct. Interacts with KCNK2 (via N-terminus); this interaction increases the channel-mediated whole cell currents and promotes plasma membrane expression of KCNK2. Interacts with STX17. Interacts with TMEM115. Interacts with TMEM41B. In terms of processing, proteolytically cleaved between Ser-528 and Ser-529 by CAPN8.

It is found in the cytoplasm. The protein resides in the cytosol. It localises to the golgi apparatus membrane. Its subcellular location is the cytoplasmic vesicle. The protein localises to the COPI-coated vesicle membrane. It is found in the cell membrane. The protein resides in the endoplasmic reticulum-Golgi intermediate compartment. Functionally, the coatomer is a cytosolic protein complex that binds to dilysine motifs and reversibly associates with Golgi non-clathrin-coated vesicles, which further mediate biosynthetic protein transport from the ER, via the Golgi up to the trans Golgi network. Coatomer complex is required for budding from Golgi membranes, and is essential for the retrograde Golgi-to-ER transport of dilysine-tagged proteins. In mammals, the coatomer can only be recruited by membranes associated to ADP-ribosylation factors (ARFs), which are small GTP-binding proteins; the complex also influences the Golgi structural integrity, as well as the processing, activity, and endocytic recycling of LDL receptors. Involved in the Golgi disassembly and reassembly processes during cell cycle. Plays a functional role in facilitating the transport of kappa-type opioid receptor mRNAs into axons and enhances translation of these proteins. Required for limiting lipid storage in lipid droplets. Involved in lipid homeostasis by regulating the presence of perilipin family members PLIN2 and PLIN3 at the lipid droplet surface and promoting the association of adipocyte surface triglyceride lipase (PNPLA2) with the lipid droplet to mediate lipolysis. Involved in autophagy by playing a role in early endosome function. Plays a role in organellar compartmentalization of secretory compartments including endoplasmic reticulum (ER)-Golgi intermediate compartment (ERGIC), Golgi, trans-Golgi network (TGN) and recycling endosomes, and in biosynthetic transport of CAV1. The chain is Coatomer subunit beta (COPB1) from Bos taurus (Bovine).